The primary structure comprises 961 residues: Glycine dehydrogenase (decarboxylating) (961 aa).

An N6-(pyridoxal phosphate)lysine modification is found at Lys709.

The protein belongs to the GcvP family. As to quaternary structure, the glycine cleavage system is composed of four proteins: P, T, L and H. Pyridoxal 5'-phosphate is required as a cofactor.

The enzyme catalyses N(6)-[(R)-lipoyl]-L-lysyl-[glycine-cleavage complex H protein] + glycine + H(+) = N(6)-[(R)-S(8)-aminomethyldihydrolipoyl]-L-lysyl-[glycine-cleavage complex H protein] + CO2. Its function is as follows. The glycine cleavage system catalyzes the degradation of glycine. The P protein binds the alpha-amino group of glycine through its pyridoxal phosphate cofactor; CO(2) is released and the remaining methylamine moiety is then transferred to the lipoamide cofactor of the H protein. The protein is Glycine dehydrogenase (decarboxylating) of Streptomyces griseus subsp. griseus (strain JCM 4626 / CBS 651.72 / NBRC 13350 / KCC S-0626 / ISP 5235).